A 226-amino-acid polypeptide reads, in one-letter code: Cytidylate kinase (226 aa).

Residue G10–T18 participates in ATP binding.

The protein belongs to the cytidylate kinase family. Type 1 subfamily.

The protein localises to the cytoplasm. The catalysed reaction is CMP + ATP = CDP + ADP. It carries out the reaction dCMP + ATP = dCDP + ADP. The sequence is that of Cytidylate kinase from Streptococcus thermophilus (strain CNRZ 1066).